Reading from the N-terminus, the 462-residue chain is 3-oxoacyl-[acyl-carrier-protein] synthase I, chloroplastic (462 aa).

Residues methionine 1–alanine 35 constitute a chloroplast transit peptide. The disordered stretch occupies residues methionine 1–aspartate 45. Over residues proline 19–proline 29 the composition is skewed to basic residues. Residues alanine 30–alanine 39 are compositionally biased toward low complexity. Positions arginine 47–proline 459 constitute a Ketosynthase family 3 (KS3) domain. Residues cysteine 213, histidine 353, and histidine 389 each act as for beta-ketoacyl synthase activity in the active site.

The protein belongs to the thiolase-like superfamily. Beta-ketoacyl-ACP synthases family. Homodimer.

The protein resides in the plastid. It is found in the chloroplast. The catalysed reaction is a fatty acyl-[ACP] + malonyl-[ACP] + H(+) = a 3-oxoacyl-[ACP] + holo-[ACP] + CO2. Functionally, catalyzes the condensation reaction of fatty acid synthesis by the addition to an acyl acceptor of two carbons from malonyl-ACP. Specific for elongation from C-10 to unsaturated C-16 and C-18 fatty acids. The chain is 3-oxoacyl-[acyl-carrier-protein] synthase I, chloroplastic (KAS12) from Hordeum vulgare (Barley).